Consider the following 488-residue polypeptide: Glycogen synthase (488 aa).

Lys-17 contacts ADP-alpha-D-glucose.

This sequence belongs to the glycosyltransferase 1 family. Bacterial/plant glycogen synthase subfamily.

The catalysed reaction is [(1-&gt;4)-alpha-D-glucosyl](n) + ADP-alpha-D-glucose = [(1-&gt;4)-alpha-D-glucosyl](n+1) + ADP + H(+). It participates in glycan biosynthesis; glycogen biosynthesis. Synthesizes alpha-1,4-glucan chains using ADP-glucose. This Nitratidesulfovibrio vulgaris (strain DSM 19637 / Miyazaki F) (Desulfovibrio vulgaris) protein is Glycogen synthase.